Reading from the N-terminus, the 155-residue chain is Ribosomal RNA large subunit methyltransferase H (155 aa).

Residues L73, G104, and L123–L128 each bind S-adenosyl-L-methionine.

It belongs to the RNA methyltransferase RlmH family. As to quaternary structure, homodimer.

The protein localises to the cytoplasm. It catalyses the reaction pseudouridine(1915) in 23S rRNA + S-adenosyl-L-methionine = N(3)-methylpseudouridine(1915) in 23S rRNA + S-adenosyl-L-homocysteine + H(+). In terms of biological role, specifically methylates the pseudouridine at position 1915 (m3Psi1915) in 23S rRNA. The chain is Ribosomal RNA large subunit methyltransferase H from Pseudomonas aeruginosa (strain UCBPP-PA14).